The sequence spans 208 residues: Octanoyltransferase (208 aa).

The BPL/LPL catalytic domain maps to 30 to 208; it reads GTASEAVFIL…ILKQEFYKIF (179 aa). Substrate-binding positions include 69-76, 142-144, and 155-157; these read RGGKFTYH, SIG, and GVA. The active-site Acyl-thioester intermediate is the cysteine 173.

This sequence belongs to the LipB family.

It localises to the cytoplasm. It carries out the reaction octanoyl-[ACP] + L-lysyl-[protein] = N(6)-octanoyl-L-lysyl-[protein] + holo-[ACP] + H(+). Its pathway is protein modification; protein lipoylation via endogenous pathway; protein N(6)-(lipoyl)lysine from octanoyl-[acyl-carrier-protein]: step 1/2. Its function is as follows. Catalyzes the transfer of endogenously produced octanoic acid from octanoyl-acyl-carrier-protein onto the lipoyl domains of lipoate-dependent enzymes. Lipoyl-ACP can also act as a substrate although octanoyl-ACP is likely to be the physiological substrate. In Orientia tsutsugamushi (strain Boryong) (Rickettsia tsutsugamushi), this protein is Octanoyltransferase.